A 620-amino-acid chain; its full sequence is Acetylcholinesterase 1 (620 aa).

Residues 1–31 form the signal peptide; it reads MRNSLLFFIFLPSTILAVDLIHLHDGSPLFG. Asn74 carries an N-linked (GlcNAc...) asparagine glycan. Cys82 and Cys109 are oxidised to a cystine. The Acyl-ester intermediate role is filled by Ser216. A disulfide bridge connects residues Cys270 and Cys286. N-linked (GlcNAc...) asparagine glycosylation occurs at Asn272. Catalysis depends on charge relay system residues Glu346 and His468. The cysteines at positions 430 and 558 are disulfide-linked. N-linked (GlcNAc...) asparagine glycosylation is found at Asn486 and Asn536.

This sequence belongs to the type-B carboxylesterase/lipase family. As to quaternary structure, oligomer composed of disulfide-linked homodimers.

It localises to the synapse. The protein localises to the secreted. It is found in the cell membrane. It carries out the reaction acetylcholine + H2O = choline + acetate + H(+). Functionally, rapidly hydrolyzes acetylcholine and releases choline into the synapse. It can hydrolyze propionylcholine and butyrylthiocholine in vitro. This chain is Acetylcholinesterase 1 (ace-1), found in Caenorhabditis elegans.